The primary structure comprises 445 residues: Tol-Pal system protein TolB (445 aa).

The first 26 residues, 1–26, serve as a signal peptide directing secretion; the sequence is MLNRRNFIRTTSALAASTALPGYAFG.

This sequence belongs to the TolB family. The Tol-Pal system is composed of five core proteins: the inner membrane proteins TolA, TolQ and TolR, the periplasmic protein TolB and the outer membrane protein Pal. They form a network linking the inner and outer membranes and the peptidoglycan layer.

The protein resides in the periplasm. In terms of biological role, part of the Tol-Pal system, which plays a role in outer membrane invagination during cell division and is important for maintaining outer membrane integrity. The protein is Tol-Pal system protein TolB of Jannaschia sp. (strain CCS1).